We begin with the raw amino-acid sequence, 35 residues long: Photosystem II reaction center protein T (35 aa).

Residues 3 to 23 (ALVYTFLLVGTLGIIFFAIFF) traverse the membrane as a helical segment.

It belongs to the PsbT family. As to quaternary structure, PSII is composed of 1 copy each of membrane proteins PsbA, PsbB, PsbC, PsbD, PsbE, PsbF, PsbH, PsbI, PsbJ, PsbK, PsbL, PsbM, PsbT, PsbY, PsbZ, Psb30/Ycf12, at least 3 peripheral proteins of the oxygen-evolving complex and a large number of cofactors. It forms dimeric complexes.

It localises to the plastid. Its subcellular location is the chloroplast thylakoid membrane. In terms of biological role, found at the monomer-monomer interface of the photosystem II (PS II) dimer, plays a role in assembly and dimerization of PSII. PSII is a light-driven water plastoquinone oxidoreductase, using light energy to abstract electrons from H(2)O, generating a proton gradient subsequently used for ATP formation. The sequence is that of Photosystem II reaction center protein T from Zygnema circumcarinatum (Green alga).